A 309-amino-acid chain; its full sequence is Aspartate carbamoyltransferase catalytic subunit (309 aa).

Carbamoyl phosphate-binding residues include Arg-58 and Thr-59. Lys-86 provides a ligand contact to L-aspartate. Carbamoyl phosphate contacts are provided by Arg-108, His-136, and Gln-139. Arg-169 and Arg-223 together coordinate L-aspartate. 2 residues coordinate carbamoyl phosphate: Gly-264 and Pro-265.

This sequence belongs to the aspartate/ornithine carbamoyltransferase superfamily. ATCase family. As to quaternary structure, heterododecamer (2C3:3R2) of six catalytic PyrB chains organized as two trimers (C3), and six regulatory PyrI chains organized as three dimers (R2).

The catalysed reaction is carbamoyl phosphate + L-aspartate = N-carbamoyl-L-aspartate + phosphate + H(+). Its pathway is pyrimidine metabolism; UMP biosynthesis via de novo pathway; (S)-dihydroorotate from bicarbonate: step 2/3. Catalyzes the condensation of carbamoyl phosphate and aspartate to form carbamoyl aspartate and inorganic phosphate, the committed step in the de novo pyrimidine nucleotide biosynthesis pathway. This Pelotomaculum thermopropionicum (strain DSM 13744 / JCM 10971 / SI) protein is Aspartate carbamoyltransferase catalytic subunit.